Here is a 175-residue protein sequence, read N- to C-terminus: Large ribosomal subunit protein uL10 (175 aa).

It belongs to the universal ribosomal protein uL10 family. Part of the ribosomal stalk of the 50S ribosomal subunit. The N-terminus interacts with L11 and the large rRNA to form the base of the stalk. The C-terminus forms an elongated spine to which L12 dimers bind in a sequential fashion forming a multimeric L10(L12)X complex.

In terms of biological role, forms part of the ribosomal stalk, playing a central role in the interaction of the ribosome with GTP-bound translation factors. The chain is Large ribosomal subunit protein uL10 from Prochlorococcus marinus (strain MIT 9211).